Consider the following 471-residue polypeptide: MENFKHLPEPFRIRVIEPVKRTTRAYRDEAILKAGMNLFLLDSEDIFIDLLTDSGTGAVTQDMQAAMLRGDEAYSGSRSYYALANAVKEIFGYEYTIPTHQGRGAEQIYIPVLIKKREQEKGLDRNKMVVFSNYFFDTTQGHSQLNGATVRNVYIKEAFDTDVDHDFKGNFDLEKLEQGILEVGANNVPYIVCTITCNSAGGQPVSLANMKAMYQIARKYDIPVIMDSARFAENAYFIQQREAEYKDWTIEQITYESYKYADALAMSAKKDAMVPMGGLLCFKDNSMEDVYNECRTLCVVQEGFPTYGGLEGGAMERLAVGLRDGMRQDWLAYRISQIEYLVQGLEKIGVVCQQPGGHAAFVDAGKLLPHIPAEQFPAQALACELYKVAGIRSVEIGSLLLGRDPKTGQQLPCPAELLRLTIPRATYTQTHMDFIIEAFKRVKENAKNIKGLDFTYEPKVLRHFTARLKEI.

At lysine 270 the chain carries N6-(pyridoxal phosphate)lysine.

The protein belongs to the beta-eliminating lyase family. Homotetramer. Pyridoxal 5'-phosphate serves as cofactor.

The catalysed reaction is L-tryptophan + H2O = indole + pyruvate + NH4(+). It functions in the pathway amino-acid degradation; L-tryptophan degradation via pyruvate pathway; indole and pyruvate from L-tryptophan: step 1/1. In Histophilus somni (strain 129Pt) (Haemophilus somnus), this protein is Tryptophanase.